The chain runs to 327 residues: Acyl-CoA desaturase (327 aa).

The Cytoplasmic portion of the chain corresponds to 1–39 (MPDREIKSPIWHPEPGTVEDVFDHTYKEKEGPKPPTVIV). A helical transmembrane segment spans residues 40–60 (WRNVILMSLLHLGALYGLFLF). A substrate-binding site is contributed by N42. Over 61–64 (PSAR) the chain is Lumenal. A helical membrane pass occupies residues 65–85 (ALTWIWFFGCLLFSALGITAG). Topologically, residues 86–184 (AHRLWSHRSY…DKVVMFQRRF (99 aa)) are cytoplasmic. Residues H87 and H92 each contribute to the Fe cation site. The Histidine box-1 motif lies at 87 to 92 (HRLWSH). Substrate contacts are provided by N115, R122, and D123. H124, H127, and H128 together coordinate Fe cation. Residues 124–128 (HRVHH) carry the Histidine box-2 motif. Positions 155 and 156 each coordinate substrate. A helical membrane pass occupies residues 185–204 (YKPSVLLMCFFVPTFVPWYV). Residues 205-208 (WGES) are Lumenal-facing. Residues 209 to 230 (LWVAYFVPALLRYALVLNATWL) traverse the membrane as a helical segment. W229 serves as a coordination point for substrate. The Cytoplasmic segment spans residues 231–327 (VNSAAHMWGN…RTGDGSHWSG (97 aa)). Fe cation-binding residues include H236, H265, H268, and H269. Residues 265–269 (HNYHH) carry the Histidine box-3 motif.

This sequence belongs to the fatty acid desaturase type 1 family. It depends on Fe(2+) as a cofactor.

It is found in the endoplasmic reticulum membrane. The catalysed reaction is octadecanoyl-CoA + 2 Fe(II)-[cytochrome b5] + O2 + 2 H(+) = (9Z)-octadecenoyl-CoA + 2 Fe(III)-[cytochrome b5] + 2 H2O. Stearoyl-CoA desaturase that utilizes O(2) and electrons from reduced cytochrome b5 to introduce the first double bond into saturated fatty acyl-CoA substrates. Has high specificity and catalyzes the insertion of a cis double bond at the delta-9 position into fatty acyl-CoA substrates including palmitoyl-CoA and stearoyl-CoA. Contributes to the biosynthesis of membrane phospholipids, cholesterol esters and triglycerides. This is Acyl-CoA desaturase from Cyprinus carpio (Common carp).